We begin with the raw amino-acid sequence, 61 residues long: UPF0434 protein Bpet2671 (61 aa).

The protein belongs to the UPF0434 family.

The sequence is that of UPF0434 protein Bpet2671 from Bordetella petrii (strain ATCC BAA-461 / DSM 12804 / CCUG 43448).